Consider the following 440-residue polypeptide: Xylose isomerase (440 aa).

Catalysis depends on residues histidine 100 and aspartate 103. Mg(2+) is bound by residues glutamate 231, glutamate 267, histidine 270, aspartate 295, aspartate 306, aspartate 308, and aspartate 338.

Belongs to the xylose isomerase family. In terms of assembly, homotetramer. Requires Mg(2+) as cofactor.

The protein resides in the cytoplasm. It carries out the reaction alpha-D-xylose = alpha-D-xylulofuranose. This chain is Xylose isomerase, found in Burkholderia ambifaria (strain MC40-6).